A 336-amino-acid chain; its full sequence is Aspartate--ammonia ligase (336 aa).

It belongs to the class-II aminoacyl-tRNA synthetase family. AsnA subfamily.

The protein localises to the cytoplasm. The catalysed reaction is L-aspartate + NH4(+) + ATP = L-asparagine + AMP + diphosphate + H(+). Its pathway is amino-acid biosynthesis; L-asparagine biosynthesis; L-asparagine from L-aspartate (ammonia route): step 1/1. The sequence is that of Aspartate--ammonia ligase from Clostridium perfringens (strain 13 / Type A).